We begin with the raw amino-acid sequence, 218 residues long: Large ribosomal subunit protein eL14 (218 aa).

The residue at position 79 (lysine 79) is an N6-acetyllysine. Residue lysine 85 is modified to N6-acetyllysine; alternate. At lysine 85 the chain carries N6-succinyllysine; alternate. Lysine 124 participates in a covalent cross-link: Glycyl lysine isopeptide (Lys-Gly) (interchain with G-Cter in SUMO2). Residue serine 139 is modified to Phosphoserine. Residues 159 to 218 are disordered; that stretch reads VPAKKATAAGKKAAAQKAPAQKAPAQKAAGQKAAQPPKAQKGQKPPAQKAPAPKASGKKA. A run of 6 repeats spans residues 174–178, 179–183, 184–188, 189–193, 196–198, and 199–201. The tract at residues 174–193 is 4 X 5 AA tandem repeats of Q-K-A-[PAS]-X; that stretch reads QKAPAQKAPAQKAAGQKAAQ. The interval 196-201 is 2 X 3 AA tandem repeats of K-[GA]-Q; the sequence is KAQKGQ. Lysine 207 bears the N6-succinyllysine mark.

This sequence belongs to the eukaryotic ribosomal protein eL14 family. In terms of assembly, component of the large ribosomal subunit.

Its subcellular location is the cytoplasm. Its function is as follows. Component of the large ribosomal subunit. The ribosome is a large ribonucleoprotein complex responsible for the synthesis of proteins in the cell. In Oryctolagus cuniculus (Rabbit), this protein is Large ribosomal subunit protein eL14 (RPL14).